A 714-amino-acid polypeptide reads, in one-letter code: Forkhead box protein P2 (714 aa).

Residues 1–28 (MMQESATETISNSSMNQNGMSTLSSQLD) show a composition bias toward polar residues. Disordered stretches follow at residues 1–45 (MMQE…SEVS) and 284–338 (KHGG…TGAS). The segment covering 291-304 (TTNNSSSTTSSTTS) has biased composition (low complexity). Over residues 314-323 (SIVNGQSSVL) the composition is skewed to polar residues. Over residues 325-336 (ARRDSSSHEETG) the composition is skewed to basic and acidic residues. The C2H2-type zinc-finger motif lies at 345–370 (GVCKWPGCESICEDFGQFLKHLNNEH). The tract at residues 387-408 (VQQLEIQLSKERERLQAMMTHL) is leucine-zipper. The segment at 421 to 425 (PLNLV) is CTBP1-binding. Low complexity predominate over residues 437–458 (TSPQSLPQTPTTPTAPVTPITQ). Residues 437–464 (TSPQSLPQTPTTPTAPVTPITQGPSVIT) are disordered. The segment at residues 503–593 (RPPFTYATLI…SQKITGSPTL (91 aa)) is a DNA-binding region (fork-head). Disordered regions lie at residues 648–667 (LDHIDSNGNSSPGCSPQPHI) and 677–714 (VIAEDEDCPMSLVTTANHSPELEDDREIEEEPLSEDLE). The span at 698–714 (LEDDREIEEEPLSEDLE) shows a compositional bias: acidic residues.

In terms of assembly, forms homodimers and heterodimers with FOXP1 and FOXP4. Dimerization is required for DNA-binding. Interacts with CTBP1. Interacts with FOXP1. Interacts with TBR1. Interacts with ZMYM2.

It localises to the nucleus. Transcriptional repressor that may play a role in the specification and differentiation of lung epithelium. May also play a role in developing neural, gastrointestinal and cardiovascular tissues. Can act with CTBP1 to synergistically repress transcription but CTPBP1 is not essential. Plays a role in synapse formation by regulating SRPX2 levels. The sequence is that of Forkhead box protein P2 (FOXP2) from Macaca mulatta (Rhesus macaque).